The sequence spans 248 residues: Probable transcriptional regulatory protein R02753 (248 aa).

This sequence belongs to the TACO1 family.

Its subcellular location is the cytoplasm. In Rhizobium meliloti (strain 1021) (Ensifer meliloti), this protein is Probable transcriptional regulatory protein R02753.